The chain runs to 405 residues: ATP-sensitive inward rectifier potassium channel 15 (405 aa).

Over 1–90 (MVARWVKGSE…LQDLWTTVID (90 aa)) the chain is Cytoplasmic. A helical membrane pass occupies residues 91–117 (MKWRYKLTLFAATFVMTWFLFGVVYYA). Residues 118 to 143 (IAFIHGDLELGESNSNHTPCIMKVDS) lie on the Extracellular side of the membrane. Positions 144 to 160 (LTGAFLFSLESQTTIGY) form an intramembrane region, helical; Pore-forming. The short motif at 157–162 (TIGYGV) is the Selectivity filter element. Topologically, residues 161–169 (GVRSITEEC) are extracellular. Residues 170-195 (PHAIFLLVAQLVITTLIEIFITGTFL) traverse the membrane as a helical segment. At 196-405 (AKIARPKKRA…RSLLLQQSNV (210 aa)) the chain is on the cytoplasmic side.

Belongs to the inward rectifier-type potassium channel (TC 1.A.2.1) family. KCNJ15 subfamily. As to quaternary structure, can form heteromultimeric channels with Kir5.1/KCNJ16. Interacts with PATJ.

It localises to the membrane. The protein localises to the cell membrane. The catalysed reaction is K(+)(in) = K(+)(out). Channel activity is regulated by variations of cytosolic pH; reversibly inhibited by acidic pH values. Inhibited by Ba(2+) and Cs(+) in a voltage-dependent manner. Inward rectifier potassium channels are characterized by a greater tendency to allow potassium to flow into the cell rather than out of it. Their voltage dependence is regulated by the concentration of extracellular potassium; as external potassium is raised, the voltage range of the channel opening shifts to more positive voltages. The inward rectification is mainly due to the blockage of outward current by internal magnesium. The polypeptide is ATP-sensitive inward rectifier potassium channel 15 (Kcnj15) (Rattus norvegicus (Rat)).